The sequence spans 690 residues: MSLLPRTAEEFSSADYWERFFRKRGEKAFEWYGDYNSLCGVLHKYIKPRDKVLVVGCGNSELSEQLYDVGYRQLTNIDISETVVSHMNQRNAERRPDLSFQQLDATQTGFESGSFQVTLDKGTLDAMASEEDGALAGRMLAEVGRVLAVGGRYVCITLAQEHVIKLAVEHFVKGWAVRVHCLTGQQNEESDSSFALPVFVLVCTKFRQAPPFAVLELCQGEDGAPARLASVEELLSAVKERQAYNLMLHKLKGGTDSSSTPSLTLCHAASGRPRYTLTIQDGPPSAKTPRSNHFAIFIVPQGRESDWLYGSAEGRAQLASSAKFRRLVIVAMHRDQEYEDMQAVQSELSPVVMELAPPGMPANQQVPFLSVGGDLGWREVIGRGLSALTGEYSVEDVRGEDGYLYRRLIFMNNSQLVQSESRLQSAAAASSASKKKNKKKAKQPASTGAKDRSVDRGFLCCTHHEVMVAGLAMLGMDAINNKDQPVSVLLVGLGGGGLPQFVRDFVPCARVEVVELDPVVLDVAQTWFGFQIDDRLKVTLGDGLDHITTLESEGERYFDVIMFDVDSKDTTLGMSCPPPAFVETSLLKKVYSLLSPRGLFMLNLVCRDSALRKSVLDRVHSVFPCVFSRGIEGEVNEVLLCCRSSGEHKPHTVPQTLQQTAKDLQKTLRANSQTAPQIDITAMLNDLKVV.

The interval 427–451 (AAASSASKKKNKKKAKQPASTGAKD) is disordered. The segment covering 433–442 (SKKKNKKKAK) has biased composition (basic residues).

Belongs to the methyltransferase superfamily.

It catalyses the reaction L-lysyl-[protein] + S-adenosyl-L-methionine = N(6)-methyl-L-lysyl-[protein] + S-adenosyl-L-homocysteine + H(+). The catalysed reaction is N(6)-methyl-L-lysyl-[protein] + S-adenosyl-L-methionine = N(6),N(6)-dimethyl-L-lysyl-[protein] + S-adenosyl-L-homocysteine + H(+). The enzyme catalyses N-terminal glycyl-L-lysyl-L-glutamyl-[protein] + 3 S-adenosyl-L-methionine = N-terminal N,N,N-trimethyl-glycyl-L-lysyl-L-glutamyl-[protein] + 3 S-adenosyl-L-homocysteine + 3 H(+). In terms of biological role, dual methyltransferase that catalyzes methylation of elongation factor 1-alpha (eef1a1 and eef1a2) at two different positions, and is therefore involved in the regulation of mRNA translation. Via its C-terminus, methylates the N-terminus of eef1a1 and eef1a2. Via its N-terminus dimethylates lysine residues of eef1a1 and eef1a2. The sequence is that of eEF1A lysine and N-terminal methyltransferase (mettl13) from Danio rerio (Zebrafish).